A 101-amino-acid polypeptide reads, in one-letter code: Co-chaperonin GroES 1 (101 aa).

Belongs to the GroES chaperonin family. Heptamer of 7 subunits arranged in a ring. Interacts with the chaperonin GroEL.

It is found in the cytoplasm. Its function is as follows. Together with the chaperonin GroEL, plays an essential role in assisting protein folding. The GroEL-GroES system forms a nano-cage that allows encapsulation of the non-native substrate proteins and provides a physical environment optimized to promote and accelerate protein folding. GroES binds to the apical surface of the GroEL ring, thereby capping the opening of the GroEL channel. This chain is Co-chaperonin GroES 1, found in Rhodopirellula baltica (strain DSM 10527 / NCIMB 13988 / SH1).